Consider the following 966-residue polypeptide: RNA polymerase-associated protein RapA (966 aa).

The 175-residue stretch at 163-337 folds into the Helicase ATP-binding domain; it reads EVGQRLHPRV…FARLKLLDAD (175 aa). 176-183 contacts ATP; it reads DEVGLGKT. The DEAH box motif lies at 283-286; sequence DEAH. Residues 488–642 enclose the Helicase C-terminal domain; sequence RVEWLITFLK…ICPMGMALFE (155 aa).

It belongs to the SNF2/RAD54 helicase family. RapA subfamily. As to quaternary structure, interacts with the RNAP. Has a higher affinity for the core RNAP than for the holoenzyme. Its ATPase activity is stimulated by binding to RNAP.

Transcription regulator that activates transcription by stimulating RNA polymerase (RNAP) recycling in case of stress conditions such as supercoiled DNA or high salt concentrations. Probably acts by releasing the RNAP, when it is trapped or immobilized on tightly supercoiled DNA. Does not activate transcription on linear DNA. Probably not involved in DNA repair. This chain is RNA polymerase-associated protein RapA, found in Actinobacillus succinogenes (strain ATCC 55618 / DSM 22257 / CCUG 43843 / 130Z).